Here is a 604-residue protein sequence, read N- to C-terminus: Putative O-acetyltransferase SACOL0978 (604 aa).

Helical transmembrane passes span 15 to 35, 43 to 63, 85 to 105, 150 to 170, 176 to 196, 212 to 232, 240 to 260, 267 to 287, 310 to 330, 332 to 352, and 377 to 397; these read YIPG…IYHL, GFLG…SLLL, LLPA…LLKS, AIEE…LLTI, IGFI…FIYS, LQTL…KLKN, YVID…FFII, IYDG…ASVV, YSLY…YVDG, IPVY…ELSY, and FIRM…LVGA. Catalysis depends on residues Ser-459, Asp-581, and His-584.

The protein belongs to the acyltransferase 3 family.

It localises to the cell membrane. This chain is Putative O-acetyltransferase SACOL0978, found in Staphylococcus aureus (strain COL).